We begin with the raw amino-acid sequence, 149 residues long: Cytochrome c-type biogenesis protein CcmE (149 aa).

The Cytoplasmic portion of the chain corresponds to 1–7 (MTRKQKR). A helical; Signal-anchor for type II membrane protein transmembrane segment spans residues 8–28 (LAVIAGGVGFIMVAVLLVLFA). Topologically, residues 29-149 (FGQSIAYFYM…GVWKGEGEAK (121 aa)) are periplasmic. Positions 123 and 127 each coordinate heme.

This sequence belongs to the CcmE/CycJ family.

Its subcellular location is the cell inner membrane. Functionally, heme chaperone required for the biogenesis of c-type cytochromes. Transiently binds heme delivered by CcmC and transfers the heme to apo-cytochromes in a process facilitated by CcmF and CcmH. This chain is Cytochrome c-type biogenesis protein CcmE, found in Allorhizobium ampelinum (strain ATCC BAA-846 / DSM 112012 / S4) (Agrobacterium vitis (strain S4)).